The sequence spans 306 residues: Curved DNA-binding protein (306 aa).

The J domain maps to 5-69 (DYYAIMGVKP…QRRAEYDQMW (65 aa)).

It is found in the cytoplasm. Its subcellular location is the nucleoid. Its function is as follows. DNA-binding protein that preferentially recognizes a curved DNA sequence. It is probably a functional analog of DnaJ; displays overlapping activities with DnaJ, but functions under different conditions, probably acting as a molecular chaperone in an adaptive response to environmental stresses other than heat shock. Lacks autonomous chaperone activity; binds native substrates and targets them for recognition by DnaK. Its activity is inhibited by the binding of CbpM. This Shigella sonnei (strain Ss046) protein is Curved DNA-binding protein.